The following is a 221-amino-acid chain: Probable transaldolase (221 aa).

Lysine 83 (schiff-base intermediate with substrate) is an active-site residue.

It belongs to the transaldolase family. Type 3B subfamily.

Its subcellular location is the cytoplasm. It catalyses the reaction D-sedoheptulose 7-phosphate + D-glyceraldehyde 3-phosphate = D-erythrose 4-phosphate + beta-D-fructose 6-phosphate. Its pathway is carbohydrate degradation; pentose phosphate pathway; D-glyceraldehyde 3-phosphate and beta-D-fructose 6-phosphate from D-ribose 5-phosphate and D-xylulose 5-phosphate (non-oxidative stage): step 2/3. Transaldolase is important for the balance of metabolites in the pentose-phosphate pathway. The sequence is that of Probable transaldolase from Petrotoga mobilis (strain DSM 10674 / SJ95).